The chain runs to 777 residues: Kelch domain-containing protein 7A (777 aa).

The chain crosses the membrane as a helical span at residues 21-38; the sequence is VVLSAAALLLVTVAYRLY. The disordered stretch occupies residues 43 to 207; it reads APAQRWGGNG…GLGQLEPPHC (165 aa). Serine 86 is modified (phosphoserine). Residues 113 to 127 show a composition bias toward basic and acidic residues; sequence TDRKPQRKGSGEERG. N-linked (GlcNAc...) asparagine glycosylation occurs at asparagine 257. Residues 313–359 form a disordered region; the sequence is LTEVPSPRPPPGSLGTGAASGGQAGDTKGAAERAASPQTGPWPSTRG. The span at 326-336 shows a compositional bias: gly residues; sequence LGTGAASGGQA. Kelch repeat units follow at residues 328 to 374, 492 to 538, 541 to 589, 590 to 632, and 635 to 677; these read TGAA…ENPE, QYLV…ICSL, YLFV…ALDG, HLYA…ATVR, and EIFV…AVNG. Position 365 is a phosphoserine (serine 365).

It is found in the membrane. The chain is Kelch domain-containing protein 7A (KLHDC7A) from Homo sapiens (Human).